We begin with the raw amino-acid sequence, 145 residues long: Hemoglobin subunit beta-A (145 aa).

The region spanning 1-145 (MLTAEEKAAV…VANALAHRYH (145 aa)) is the Globin domain. 2 residues coordinate heme b: His-62 and His-91.

The protein belongs to the globin family. In terms of assembly, heterotetramer of two alpha chains and two beta chains. In terms of tissue distribution, red blood cells.

Its function is as follows. Involved in oxygen transport from the lung to the various peripheral tissues. The polypeptide is Hemoglobin subunit beta-A (Capra hircus (Goat)).